Here is a 174-residue protein sequence, read N- to C-terminus: Recombination protein RecR (174 aa).

A C4-type zinc finger spans residues 30-45 (CNACRTFTEEEECTIC). The 96-residue stretch at 54–149 (GQLCIVEMPE…KVTRIAHGIP (96 aa)) folds into the Toprim domain.

Belongs to the RecR family.

Functionally, may play a role in DNA repair. It seems to be involved in an RecBC-independent recombinational process of DNA repair. It may act with RecF and RecO. This Haemophilus ducreyi (strain 35000HP / ATCC 700724) protein is Recombination protein RecR.